We begin with the raw amino-acid sequence, 157 residues long: SsrA-binding protein (157 aa).

This sequence belongs to the SmpB family.

It localises to the cytoplasm. Its function is as follows. Required for rescue of stalled ribosomes mediated by trans-translation. Binds to transfer-messenger RNA (tmRNA), required for stable association of tmRNA with ribosomes. tmRNA and SmpB together mimic tRNA shape, replacing the anticodon stem-loop with SmpB. tmRNA is encoded by the ssrA gene; the 2 termini fold to resemble tRNA(Ala) and it encodes a 'tag peptide', a short internal open reading frame. During trans-translation Ala-aminoacylated tmRNA acts like a tRNA, entering the A-site of stalled ribosomes, displacing the stalled mRNA. The ribosome then switches to translate the ORF on the tmRNA; the nascent peptide is terminated with the 'tag peptide' encoded by the tmRNA and targeted for degradation. The ribosome is freed to recommence translation, which seems to be the essential function of trans-translation. This chain is SsrA-binding protein, found in Chlorobium chlorochromatii (strain CaD3).